The sequence spans 249 residues: Gamma-glutamyl peptidase 3 (249 aa).

In terms of domain architecture, Glutamine amidotransferase type-1 spans 19-217 (SEFVKKTYGG…VDRVLNMKLM (199 aa)). The Nucleophile role is filled by cysteine 103. Catalysis depends on residues histidine 196 and glutamate 198.

This sequence belongs to the peptidase C26 family.

Its subcellular location is the cytoplasm. It is found in the cytosol. The catalysed reaction is an S-[(1E)-1-(hydroxyimino)-omega-(methylsulfanyl)alkyl]-L-glutathione + H2O = an S-[(1E)-1-(hydroxyimino)-omega-(methylsulfanyl)alkyl]-L-cysteinylglycine + L-glutamate. It catalyses the reaction (E)-1-(glutathione-S-yl)-2-(1H-indol-3-yl)acetohydroximate + H2O = (E)-1-(glycyl-L-cystein-S-yl)-2-(1H-indol-3-yl)acetohydroximate + L-glutamate. It carries out the reaction 2-(glutathion-S-yl)-2-(1H-indol-3-yl)acetonitrile + H2O = 2-(glycyl-L-cystein-S-yl)-2-(1H-indol-3-yl)acetonitrile + L-glutamate. The enzyme catalyses (Z)-1-(glutathione-S-yl)-2-phenylacetohydroximate + H2O = (Z)-1-(glycyl-L-cystein-S-yl)-2-phenylacetohydroximate + L-glutamate. Its pathway is secondary metabolite biosynthesis. In terms of biological role, involved in glucosinolate biosynthesis. Hydrolyzes the gamma-glutamyl peptide bond of several glutathione (GSH) conjugates to produce Cys-Gly conjugates related to glucosinolates. The gamma-Glu-Cys-Gly-GSH conjugates are the sulfur-donating molecule in glucosinolate biosynthesis. Can use the GSH conjugate of the camalexin intermediate IAN (GS-IAN) as substrate. Required for the biosynthesis of camalexin, a pathogen-inducible phytoalexin with antibacterial and antifungal properties. The chain is Gamma-glutamyl peptidase 3 from Arabidopsis thaliana (Mouse-ear cress).